The sequence spans 628 residues: Beta-galactosidase large subunit (628 aa).

The active-site Proton donor is the glutamate 468. Glutamate 536 (nucleophile) is an active-site residue.

The protein belongs to the glycosyl hydrolase 2 family. As to quaternary structure, heterodimer of a large (LacL) and a small subunit (LacM).

The catalysed reaction is Hydrolysis of terminal non-reducing beta-D-galactose residues in beta-D-galactosides.. Its function is as follows. Component of a beta-galactosidase. The sequence is that of Beta-galactosidase large subunit (lacL) from Lactobacillus acidophilus (strain ATCC 700396 / NCK56 / N2 / NCFM).